Here is a 248-residue protein sequence, read N- to C-terminus: 3-deoxy-manno-octulosonate cytidylyltransferase (248 aa).

It belongs to the KdsB family.

Its subcellular location is the cytoplasm. The catalysed reaction is 3-deoxy-alpha-D-manno-oct-2-ulosonate + CTP = CMP-3-deoxy-beta-D-manno-octulosonate + diphosphate. It functions in the pathway nucleotide-sugar biosynthesis; CMP-3-deoxy-D-manno-octulosonate biosynthesis; CMP-3-deoxy-D-manno-octulosonate from 3-deoxy-D-manno-octulosonate and CTP: step 1/1. Its pathway is bacterial outer membrane biogenesis; lipopolysaccharide biosynthesis. Its function is as follows. Activates KDO (a required 8-carbon sugar) for incorporation into bacterial lipopolysaccharide in Gram-negative bacteria. This is 3-deoxy-manno-octulosonate cytidylyltransferase from Klebsiella pneumoniae (strain 342).